Consider the following 675-residue polypeptide: Polyphosphate kinase (675 aa).

Position 42 (asparagine 42) interacts with ATP. Positions 372 and 401 each coordinate Mg(2+). The Phosphohistidine intermediate role is filled by histidine 431. 3 residues coordinate ATP: tyrosine 464, arginine 558, and histidine 586.

It belongs to the polyphosphate kinase 1 (PPK1) family. The cofactor is Mg(2+). Post-translationally, an intermediate of this reaction is the autophosphorylated ppk in which a phosphate is covalently linked to a histidine residue through a N-P bond.

It catalyses the reaction [phosphate](n) + ATP = [phosphate](n+1) + ADP. Catalyzes the reversible transfer of the terminal phosphate of ATP to form a long-chain polyphosphate (polyP). The polypeptide is Polyphosphate kinase (Helicobacter pylori (strain ATCC 700392 / 26695) (Campylobacter pylori)).